Consider the following 801-residue polypeptide: Mediator of RNA polymerase II transcription subunit 25 (801 aa).

3 stretches are compositionally biased toward low complexity: residues 647 to 676 (PQQL…QPGA), 687 to 710 (PQLR…QQPL), and 722 to 735 (PHQA…HQAP). The interval 647–735 (PQQLASQAPP…MGQQMQHQAP (89 aa)) is disordered. The short motif at 689 to 693 (LRNLL) is the LXXLL motif element.

It belongs to the Mediator complex subunit 25 family. Component of the Mediator complex.

It is found in the nucleus. Component of the Mediator complex, a coactivator involved in the regulated transcription of nearly all RNA polymerase II-dependent genes. Mediator functions as a bridge to convey information from gene-specific regulatory proteins to the basal RNA polymerase II transcription machinery. Mediator is recruited to promoters by direct interactions with regulatory proteins and serves as a scaffold for the assembly of a functional preinitiation complex with RNA polymerase II and the general transcription factors. The polypeptide is Mediator of RNA polymerase II transcription subunit 25 (med25) (Xenopus laevis (African clawed frog)).